The chain runs to 258 residues: SufE-like protein 2, chloroplastic (258 aa).

The segment at 1–32 is disordered; that stretch reads MNTSSSFKALASPPLISTSRPTTKSFPNPRFT. The segment covering 15–32 has biased composition (polar residues); sequence LISTSRPTTKSFPNPRFT. Cysteine 122 (cysteine persulfide intermediate) is an active-site residue.

This sequence belongs to the SufE family. In terms of tissue distribution, highly expressed in flowers and pollen, and at low levels in roots, leaves and stems.

The protein resides in the plastid. The protein localises to the chloroplast. It functions in the pathway cofactor biosynthesis; iron-sulfur cluster biosynthesis. Its function is as follows. Participates in cysteine desulfurization mediated by NFS2. Can activate the cysteine desulfurase activity of NFS2 in vitro. Cysteine desulfurization mobilizes sulfur from L-cysteine to yield L-alanine and supplies the inorganic sulfur for iron-sulfur (Fe-S) cluster formation. This chain is SufE-like protein 2, chloroplastic (SUFE2), found in Arabidopsis thaliana (Mouse-ear cress).